The chain runs to 311 residues: HPr kinase/phosphorylase (311 aa).

Catalysis depends on residues His-139 and Lys-160. An ATP-binding site is contributed by 154 to 161 (GESGVGKS). Ser-161 lines the Mg(2+) pocket. Asp-178 (proton acceptor; for phosphorylation activity. Proton donor; for dephosphorylation activity) is an active-site residue. The segment at 202-211 (IEIRGIGILD) is important for the catalytic mechanism of both phosphorylation and dephosphorylation. A Mg(2+)-binding site is contributed by Glu-203. The active site involves Arg-244. The tract at residues 265-270 (PVRPGR) is important for the catalytic mechanism of dephosphorylation.

The protein belongs to the HPrK/P family. As to quaternary structure, homohexamer. It depends on Mg(2+) as a cofactor.

It catalyses the reaction [HPr protein]-L-serine + ATP = [HPr protein]-O-phospho-L-serine + ADP + H(+). The enzyme catalyses [HPr protein]-O-phospho-L-serine + phosphate + H(+) = [HPr protein]-L-serine + diphosphate. Functionally, catalyzes the ATP- as well as the pyrophosphate-dependent phosphorylation of a specific serine residue in HPr, a phosphocarrier protein of the phosphoenolpyruvate-dependent sugar phosphotransferase system (PTS). HprK/P also catalyzes the pyrophosphate-producing, inorganic phosphate-dependent dephosphorylation (phosphorolysis) of seryl-phosphorylated HPr (P-Ser-HPr). The two antagonistic activities of HprK/P are regulated by several intracellular metabolites, which change their concentration in response to the absence or presence of rapidly metabolisable carbon sources (glucose, fructose, etc.) in the growth medium. Therefore, by controlling the phosphorylation state of HPr, HPrK/P is a sensor enzyme that plays a major role in the regulation of carbon metabolism and sugar transport: it mediates carbon catabolite repression (CCR), and regulates PTS-catalyzed carbohydrate uptake and inducer exclusion. The sequence is that of HPr kinase/phosphorylase from Caldicellulosiruptor bescii (strain ATCC BAA-1888 / DSM 6725 / KCTC 15123 / Z-1320) (Anaerocellum thermophilum).